The primary structure comprises 85 residues: Putative membrane protein insertion efficiency factor (85 aa).

This sequence belongs to the UPF0161 family.

Its subcellular location is the cell inner membrane. Functionally, could be involved in insertion of integral membrane proteins into the membrane. The polypeptide is Putative membrane protein insertion efficiency factor (Escherichia coli O157:H7).